The sequence spans 341 residues: NADH-quinone oxidoreductase subunit H (341 aa).

The next 8 membrane-spanning stretches (helical) occupy residues 16 to 36 (LLIIVLQIVAIVLPLLIAVAY), 86 to 106 (VVFVGAPMLTFFLALVAWAVI), 119 to 139 (VGVLYLFAISSLGVYGIIMAG), 165 to 185 (IGFILISVLLTVGSLNLSDVV), 191 to 211 (MWFIVPHFPLFILFIISGLAE), 254 to 274 (GAMTSILFLGGWMAPFGLGWL), 276 to 296 (IPGLIWFVLKICLVMFVFLWV), and 315 to 335 (VFLPFSLFWLVLTASVLTAFG).

It belongs to the complex I subunit 1 family. In terms of assembly, NDH-1 is composed of 14 different subunits. Subunits NuoA, H, J, K, L, M, N constitute the membrane sector of the complex.

It localises to the cell inner membrane. The enzyme catalyses a quinone + NADH + 5 H(+)(in) = a quinol + NAD(+) + 4 H(+)(out). In terms of biological role, NDH-1 shuttles electrons from NADH, via FMN and iron-sulfur (Fe-S) centers, to quinones in the respiratory chain. The immediate electron acceptor for the enzyme in this species is believed to be ubiquinone. Couples the redox reaction to proton translocation (for every two electrons transferred, four hydrogen ions are translocated across the cytoplasmic membrane), and thus conserves the redox energy in a proton gradient. This subunit may bind ubiquinone. In Paramagnetospirillum magneticum (strain ATCC 700264 / AMB-1) (Magnetospirillum magneticum), this protein is NADH-quinone oxidoreductase subunit H.